Reading from the N-terminus, the 617-residue chain is Chaperone protein HscA homolog (617 aa).

The protein belongs to the heat shock protein 70 family.

In terms of biological role, chaperone involved in the maturation of iron-sulfur cluster-containing proteins. Has a low intrinsic ATPase activity which is markedly stimulated by HscB. The protein is Chaperone protein HscA homolog of Actinobacillus pleuropneumoniae serotype 5b (strain L20).